A 140-amino-acid chain; its full sequence is Transcription antitermination protein NusB (140 aa).

Belongs to the NusB family.

In terms of biological role, involved in transcription antitermination. Required for transcription of ribosomal RNA (rRNA) genes. Binds specifically to the boxA antiterminator sequence of the ribosomal RNA (rrn) operons. This is Transcription antitermination protein NusB from Elusimicrobium minutum (strain Pei191).